A 312-amino-acid chain; its full sequence is tRNA-cytidine(32) 2-sulfurtransferase (312 aa).

Residues 39 to 44 carry the PP-loop motif motif; it reads SGGKDS. [4Fe-4S] cluster contacts are provided by Cys114, Cys117, and Cys205.

It belongs to the TtcA family. Homodimer. Mg(2+) serves as cofactor. Requires [4Fe-4S] cluster as cofactor.

It localises to the cytoplasm. The catalysed reaction is cytidine(32) in tRNA + S-sulfanyl-L-cysteinyl-[cysteine desulfurase] + AH2 + ATP = 2-thiocytidine(32) in tRNA + L-cysteinyl-[cysteine desulfurase] + A + AMP + diphosphate + H(+). It functions in the pathway tRNA modification. Catalyzes the ATP-dependent 2-thiolation of cytidine in position 32 of tRNA, to form 2-thiocytidine (s(2)C32). The sulfur atoms are provided by the cysteine/cysteine desulfurase (IscS) system. The protein is tRNA-cytidine(32) 2-sulfurtransferase of Ralstonia nicotianae (strain ATCC BAA-1114 / GMI1000) (Ralstonia solanacearum).